The primary structure comprises 234 residues: Leucyl/phenylalanyl-tRNA--protein transferase (234 aa).

It belongs to the L/F-transferase family.

It localises to the cytoplasm. The catalysed reaction is N-terminal L-lysyl-[protein] + L-leucyl-tRNA(Leu) = N-terminal L-leucyl-L-lysyl-[protein] + tRNA(Leu) + H(+). It catalyses the reaction N-terminal L-arginyl-[protein] + L-leucyl-tRNA(Leu) = N-terminal L-leucyl-L-arginyl-[protein] + tRNA(Leu) + H(+). It carries out the reaction L-phenylalanyl-tRNA(Phe) + an N-terminal L-alpha-aminoacyl-[protein] = an N-terminal L-phenylalanyl-L-alpha-aminoacyl-[protein] + tRNA(Phe). In terms of biological role, functions in the N-end rule pathway of protein degradation where it conjugates Leu, Phe and, less efficiently, Met from aminoacyl-tRNAs to the N-termini of proteins containing an N-terminal arginine or lysine. This is Leucyl/phenylalanyl-tRNA--protein transferase from Pseudoalteromonas atlantica (strain T6c / ATCC BAA-1087).